We begin with the raw amino-acid sequence, 236 residues long: 2-C-methyl-D-erythritol 4-phosphate cytidylyltransferase (236 aa).

This sequence belongs to the IspD/TarI cytidylyltransferase family. IspD subfamily. Homodimer.

The catalysed reaction is 2-C-methyl-D-erythritol 4-phosphate + CTP + H(+) = 4-CDP-2-C-methyl-D-erythritol + diphosphate. Its pathway is isoprenoid biosynthesis; isopentenyl diphosphate biosynthesis via DXP pathway; isopentenyl diphosphate from 1-deoxy-D-xylulose 5-phosphate: step 2/6. Its function is as follows. Catalyzes the formation of 4-diphosphocytidyl-2-C-methyl-D-erythritol from CTP and 2-C-methyl-D-erythritol 4-phosphate (MEP). The polypeptide is 2-C-methyl-D-erythritol 4-phosphate cytidylyltransferase (Escherichia fergusonii (strain ATCC 35469 / DSM 13698 / CCUG 18766 / IAM 14443 / JCM 21226 / LMG 7866 / NBRC 102419 / NCTC 12128 / CDC 0568-73)).